We begin with the raw amino-acid sequence, 245 residues long: Membrane-spanning 4-domains subfamily A member 15 (245 aa).

Residues 1–30 are disordered; the sequence is MWERRGRGESAAGTAAVASRNASGLRPPPA. The next 4 helical transmembrane spans lie at 78–98, 103–123, 147–167, and 176–196; these read GTVQILIGLIHLGFGSVLLMV, LGMLFIEGGVPFWGGACFIIS, ILSAMAAFAGTAILLMDFGVT, and LAVLTIFTILEFFIAVIATHF.

It belongs to the MS4A family.

It is found in the membrane. In terms of biological role, may be involved in signal transduction as a component of a multimeric receptor complex. This chain is Membrane-spanning 4-domains subfamily A member 15 (Ms4a15), found in Mus musculus (Mouse).